We begin with the raw amino-acid sequence, 683 residues long: DNA ligase (683 aa).

NAD(+)-binding positions include 36–40 (DAEYD), 85–86 (SL), and Glu-119. The active-site N6-AMP-lysine intermediate is the Lys-121. NAD(+) is bound by residues Arg-142, Glu-179, Lys-295, and Lys-319. Residues Cys-413, Cys-416, Cys-431, and Cys-437 each coordinate Zn(2+). In terms of domain architecture, BRCT spans 596–683 (TETLPLSGQT…EHQAHLGGEA (88 aa)).

Belongs to the NAD-dependent DNA ligase family. LigA subfamily. It depends on Mg(2+) as a cofactor. Requires Mn(2+) as cofactor.

The enzyme catalyses NAD(+) + (deoxyribonucleotide)n-3'-hydroxyl + 5'-phospho-(deoxyribonucleotide)m = (deoxyribonucleotide)n+m + AMP + beta-nicotinamide D-nucleotide.. Its function is as follows. DNA ligase that catalyzes the formation of phosphodiester linkages between 5'-phosphoryl and 3'-hydroxyl groups in double-stranded DNA using NAD as a coenzyme and as the energy source for the reaction. It is essential for DNA replication and repair of damaged DNA. The polypeptide is DNA ligase (Hahella chejuensis (strain KCTC 2396)).